We begin with the raw amino-acid sequence, 892 residues long: Alanine--tRNA ligase (892 aa).

His593, His597, Cys694, and His698 together coordinate Zn(2+).

Belongs to the class-II aminoacyl-tRNA synthetase family. Requires Zn(2+) as cofactor.

The protein resides in the cytoplasm. The enzyme catalyses tRNA(Ala) + L-alanine + ATP = L-alanyl-tRNA(Ala) + AMP + diphosphate. Catalyzes the attachment of alanine to tRNA(Ala) in a two-step reaction: alanine is first activated by ATP to form Ala-AMP and then transferred to the acceptor end of tRNA(Ala). Also edits incorrectly charged Ser-tRNA(Ala) and Gly-tRNA(Ala) via its editing domain. The sequence is that of Alanine--tRNA ligase from Helicobacter hepaticus (strain ATCC 51449 / 3B1).